The primary structure comprises 96 residues: Glutamyl-tRNA(Gln) amidotransferase subunit C (96 aa).

The protein belongs to the GatC family. In terms of assembly, heterotrimer of A, B and C subunits.

It carries out the reaction L-glutamyl-tRNA(Gln) + L-glutamine + ATP + H2O = L-glutaminyl-tRNA(Gln) + L-glutamate + ADP + phosphate + H(+). The catalysed reaction is L-aspartyl-tRNA(Asn) + L-glutamine + ATP + H2O = L-asparaginyl-tRNA(Asn) + L-glutamate + ADP + phosphate + 2 H(+). Functionally, allows the formation of correctly charged Asn-tRNA(Asn) or Gln-tRNA(Gln) through the transamidation of misacylated Asp-tRNA(Asn) or Glu-tRNA(Gln) in organisms which lack either or both of asparaginyl-tRNA or glutaminyl-tRNA synthetases. The reaction takes place in the presence of glutamine and ATP through an activated phospho-Asp-tRNA(Asn) or phospho-Glu-tRNA(Gln). The polypeptide is Glutamyl-tRNA(Gln) amidotransferase subunit C (Neisseria meningitidis serogroup A / serotype 4A (strain DSM 15465 / Z2491)).